The following is a 663-amino-acid chain: UvrABC system protein B (663 aa).

The region spanning 31–271 (DNIEGGEKAQ…EQSISKIQAE (241 aa)) is the Helicase ATP-binding domain. Residue 44 to 51 (GATGTGKT) participates in ATP binding. The short motif at 97–120 (YYDYYQPEAYVPSSDTYIEKDSSV) is the Beta-hairpin element. A Helicase C-terminal domain is found at 435–601 (QMDDLLGEIN…TIKKDIRDLI (167 aa)). The UVR domain occupies 627–662 (QEAIKQLQKNMQEAAELLDFELAAQLRDLILELKAM).

Belongs to the UvrB family. In terms of assembly, forms a heterotetramer with UvrA during the search for lesions. Interacts with UvrC in an incision complex.

Its subcellular location is the cytoplasm. In terms of biological role, the UvrABC repair system catalyzes the recognition and processing of DNA lesions. A damage recognition complex composed of 2 UvrA and 2 UvrB subunits scans DNA for abnormalities. Upon binding of the UvrA(2)B(2) complex to a putative damaged site, the DNA wraps around one UvrB monomer. DNA wrap is dependent on ATP binding by UvrB and probably causes local melting of the DNA helix, facilitating insertion of UvrB beta-hairpin between the DNA strands. Then UvrB probes one DNA strand for the presence of a lesion. If a lesion is found the UvrA subunits dissociate and the UvrB-DNA preincision complex is formed. This complex is subsequently bound by UvrC and the second UvrB is released. If no lesion is found, the DNA wraps around the other UvrB subunit that will check the other stand for damage. This Streptococcus equi subsp. equi (strain 4047) protein is UvrABC system protein B.